A 352-amino-acid polypeptide reads, in one-letter code: C-C chemokine receptor type 5 (352 aa).

Residues 1-30 lie on the Extracellular side of the membrane; the sequence is MDYQVSSPTYDIDYYTSEPCQKINVKQIAA. Tyrosine 3 bears the Sulfotyrosine mark. Serine 6 and serine 7 each carry an O-linked (GalNAc...) serine glycan. 3 positions are modified to sulfotyrosine: tyrosine 10, tyrosine 14, and tyrosine 15. Cystine bridges form between cysteine 20-cysteine 269 and cysteine 101-cysteine 178. The helical transmembrane segment at 31-58 threads the bilayer; it reads RLLPPLYSLVFIFGFVGNILVVLILINC. At 59–68 the chain is on the cytoplasmic side; it reads KRLKSMTDIY. A helical transmembrane segment spans residues 69 to 89; the sequence is LLNLAISDLLFLLTVPFWAHY. Topologically, residues 90–102 are extracellular; that stretch reads AAAQWDFGNTMCQ. The chain crosses the membrane as a helical span at residues 103–124; it reads LLTGLYFIGFFSGIFFIILLTI. Residues 125–141 are Cytoplasmic-facing; sequence DRYLAIVHAVFALKART. Residues 142–166 form a helical membrane-spanning segment; sequence VTFGVVTSVITWVVAVFASLPRIIF. Residues 167-198 lie on the Extracellular side of the membrane; the sequence is TTSHRERLHYTCSSHFPYSQYQFWKNFHTLKI. A helical membrane pass occupies residues 199-218; the sequence is VILGLVLPLLVMVICYSGIL. Residues 219–235 lie on the Cytoplasmic side of the membrane; sequence KTLLRCRNEKKRHRAVR. Residues 236-260 traverse the membrane as a helical segment; it reads LIFTIMIVYFLFWAPYNIVLLLNTF. Residues 261–277 are Extracellular-facing; the sequence is QEFFGLNNCSSSNRLDQ. The helical transmembrane segment at 278–301 threads the bilayer; that stretch reads AMQVTETLGMTHCCINPIIYAFVG. The Cytoplasmic portion of the chain corresponds to 302 to 352; the sequence is EKFRNYLLVFFQKHIAKRFCKCCSIFQQEAPERASSVYTRSTGEQEISVGL. 3 S-palmitoyl cysteine lipidation sites follow: cysteine 321, cysteine 323, and cysteine 324. A phosphoserine; by BARK1 mark is found at serine 336, serine 337, serine 342, and serine 349.

This sequence belongs to the G-protein coupled receptor 1 family. Interacts with PRAF2. Efficient ligand binding to CCL3/MIP-1alpha and CCL4/MIP-1beta requires sulfation, O-glycosylation and sialic acid modifications. Glycosylation on Ser-6 is required for efficient binding of CCL4. Interacts with GRK2. Interacts with ARRB1 and ARRB2. Interacts with CNIH4. Interacts with S100A4; this interaction stimulates T-lymphocyte chemotaxis. Post-translationally, sulfated on at least 2 of the N-terminal tyrosines. Sulfation is required for efficient binding of the chemokines, CCL3 and CCL4. In terms of processing, palmitoylation in the C-terminal is important for cell surface expression. Phosphorylation on serine residues in the C-terminal is stimulated by binding CC chemokines especially by APO-RANTES. Post-translationally, O-glycosylated, but not N-glycosylated. Ser-6 appears to be the major site even if Ser-7 may be also O-glycosylated. Also sialylated glycans present which contribute to chemokine binding. Thr-16 and Ser-17 may also be glycosylated and, if so, with small moieties such as a T-antigen.

The protein localises to the cell membrane. Receptor for a number of inflammatory CC-chemokines including CCL3/MIP-1-alpha, CCL4/MIP-1-beta and RANTES and subsequently transduces a signal by increasing the intracellular calcium ion level. May play a role in the control of granulocytic lineage proliferation or differentiation. Participates in T-lymphocyte migration to the infection site by acting as a chemotactic receptor. The protein is C-C chemokine receptor type 5 (CCR5) of Cercopithecus ascanius (Black-cheeked white-nosed monkey).